The sequence spans 919 residues: Isoleucine--tRNA ligase (919 aa).

A 'HIGH' region motif is present at residues 57–67; sequence PYANGNIHIGH. An L-isoleucyl-5'-AMP-binding site is contributed by Glu-569. The 'KMSKS' region motif lies at 610–614; that stretch reads KMSKS. ATP is bound at residue Lys-613. Cys-896, Cys-899, Cys-911, and Cys-914 together coordinate Zn(2+).

This sequence belongs to the class-I aminoacyl-tRNA synthetase family. IleS type 1 subfamily. Monomer. Zn(2+) is required as a cofactor.

Its subcellular location is the cytoplasm. It carries out the reaction tRNA(Ile) + L-isoleucine + ATP = L-isoleucyl-tRNA(Ile) + AMP + diphosphate. Functionally, catalyzes the attachment of isoleucine to tRNA(Ile). As IleRS can inadvertently accommodate and process structurally similar amino acids such as valine, to avoid such errors it has two additional distinct tRNA(Ile)-dependent editing activities. One activity is designated as 'pretransfer' editing and involves the hydrolysis of activated Val-AMP. The other activity is designated 'posttransfer' editing and involves deacylation of mischarged Val-tRNA(Ile). In Aliarcobacter butzleri (strain RM4018) (Arcobacter butzleri), this protein is Isoleucine--tRNA ligase.